Here is a 220-residue protein sequence, read N- to C-terminus: 7-cyano-7-deazaguanine synthase (220 aa).

10–20 (FSGGQDSTTCL) lines the ATP pocket. 4 residues coordinate Zn(2+): Cys-186, Cys-195, Cys-198, and Cys-201.

This sequence belongs to the QueC family. Homodimer. The cofactor is Zn(2+).

The catalysed reaction is 7-carboxy-7-deazaguanine + NH4(+) + ATP = 7-cyano-7-deazaguanine + ADP + phosphate + H2O + H(+). It functions in the pathway purine metabolism; 7-cyano-7-deazaguanine biosynthesis. In terms of biological role, catalyzes the ATP-dependent conversion of 7-carboxy-7-deazaguanine (CDG) to 7-cyano-7-deazaguanine (preQ(0)). This is 7-cyano-7-deazaguanine synthase from Bacillus cereus (strain ATCC 14579 / DSM 31 / CCUG 7414 / JCM 2152 / NBRC 15305 / NCIMB 9373 / NCTC 2599 / NRRL B-3711).